The chain runs to 501 residues: Probable cysteine desulfurase, mitochondrial (501 aa).

Pyridoxal 5'-phosphate contacts are provided by residues 172-173, Asn-252, Gln-280, and 300-302; these read AT and SAH. Lys-303 is subject to N6-(pyridoxal phosphate)lysine. Residue Thr-340 coordinates pyridoxal 5'-phosphate. Catalysis depends on Cys-425, which acts as the Cysteine persulfide intermediate. Position 425 (Cys-425) interacts with [2Fe-2S] cluster.

Belongs to the class-V pyridoxal-phosphate-dependent aminotransferase family. NifS/IscS subfamily. Pyridoxal 5'-phosphate serves as cofactor.

It is found in the mitochondrion. It carries out the reaction (sulfur carrier)-H + L-cysteine = (sulfur carrier)-SH + L-alanine. In terms of biological role, catalyzes the removal of elemental sulfur from cysteine to produce alanine. It supplies the inorganic sulfur for iron-sulfur (Fe-S) clusters. Plays a role in both tRNA-processing and mitochondrial metabolism. Involved in the 2-thio-modification of both 5-carboxymethylaminomethyl-2-thiouridine in mitochondrial tRNAs and 5-methoxycarbonylmethyl-2-thiouridine (mcm5s2U) in cytoplasmic tRNAs. This Schizosaccharomyces pombe (strain 972 / ATCC 24843) (Fission yeast) protein is Probable cysteine desulfurase, mitochondrial.